Reading from the N-terminus, the 449-residue chain is Putative gustatory receptor 77a (449 aa).

Residues 1–27 (MPLPLGDPLALAVSPQLGYIRITAMPR) are Cytoplasmic-facing. The chain crosses the membrane as a helical span at residues 28–50 (WLQLPGMSALGILYSLTRVFGLM). Residues 51 to 70 (ATANWSPRGIKRVRQSLYLR) are Extracellular-facing. A helical transmembrane segment spans residues 71–93 (IHGCVMLIFVGCFSPFAFWCIFQ). The Cytoplasmic segment spans residues 94 to 102 (RMAFLRQNR). A helical membrane pass occupies residues 103–125 (ILLMIGFNRYVLLLVCAFMTLWI). The Extracellular segment spans residues 126-205 (HCFKQAEIIG…VRRNFMYACS (80 aa)). Residues 206 to 228 (LVFVSVCQAILQLSLGMYTMAIL) form a helical membrane-spanning segment. The Cytoplasmic segment spans residues 229–298 (FLGHLVRHSN…LLKLHRSICS (70 aa)). The chain crosses the membrane as a helical span at residues 299 to 321 (LCAVQAVCFLGFVPLECTIHLFF). Residues 322 to 340 (TYFMKYSKFILRKYGRSFP) are Extracellular-facing. A helical transmembrane segment spans residues 341-363 (LNYFAIAFLVGLFTNLLLVILPT). Over 364–420 (YYSERRFNCTREIIKGGGLAFPSRITVKQLRHTMHFYGLYLKNVEHVFAVSACGLFK) the chain is Cytoplasmic. The chain crosses the membrane as a helical span at residues 421–443 (LNNAILFCIVGAILEYLMILIQF). Over 444 to 449 (DKVLNK) the chain is Extracellular.

The protein belongs to the insect chemoreceptor superfamily. Gustatory receptor (GR) family. Gr77a subfamily. In larvae, is expressed in dorsal pharyngeal sense organ.

It is found in the cell membrane. Its function is as follows. Probable gustatory receptor which mediates acceptance or avoidance behavior, depending on its substrates. The protein is Putative gustatory receptor 77a (Gr77a) of Drosophila melanogaster (Fruit fly).